Reading from the N-terminus, the 306-residue chain is Homoserine O-acetyltransferase (306 aa).

Cys142 functions as the Acyl-thioester intermediate in the catalytic mechanism. Residues Lys163 and Ser192 each contribute to the substrate site. The Proton acceptor role is filled by His235. Glu237 is a catalytic residue. Arg249 provides a ligand contact to substrate.

This sequence belongs to the MetA family.

Its subcellular location is the cytoplasm. It catalyses the reaction L-homoserine + acetyl-CoA = O-acetyl-L-homoserine + CoA. Its pathway is amino-acid biosynthesis; L-methionine biosynthesis via de novo pathway; O-acetyl-L-homoserine from L-homoserine: step 1/1. In terms of biological role, transfers an acetyl group from acetyl-CoA to L-homoserine, forming acetyl-L-homoserine. In Brevibacillus brevis (strain 47 / JCM 6285 / NBRC 100599), this protein is Homoserine O-acetyltransferase.